The sequence spans 758 residues: Protein hunchback (758 aa).

2 disordered regions span residues Glu30 to Ser51 and Glu172 to Lys214. Positions Ser39–Ser51 are enriched in polar residues. Residue Thr178 is modified to Phosphothreonine. Residues Ser188, Ser207, Ser209, and Ser210 each carry the phosphoserine modification. The segment covering Glu198 to Lys214 has biased composition (basic and acidic residues). 4 consecutive C2H2-type zinc fingers follow at residues Tyr240 to His262, Leu269 to His291, Phe297 to His319, and Tyr325 to His349. 2 disordered regions span residues Leu365–Thr416 and Gln513–Lys536. 2 stretches are compositionally biased toward low complexity: residues Val398–Ala415 and Gln513–Ser522. The span at Asp523 to Glu532 shows a compositional bias: acidic residues. Phosphoserine is present on residues Ser537 and Ser540. Positions Met603 to Ser695 are disordered. Low complexity predominate over residues Ala652–Ser695. 2 consecutive C2H2-type zinc fingers follow at residues Tyr705–His727 and Phe733–His757.

This sequence belongs to the hunchback C2H2-type zinc-finger protein family. As to expression, in embryo, expression of maternal transcript is highest in anterior region. Zygotic transcript is expressed in anterior region until the beginning of gastrulation and in posterior region until early gastrulation. After this, it is expressed in developing nervous system.

It localises to the nucleus. In terms of biological role, gap class segmentation protein that controls development of head structures. The chain is Protein hunchback from Drosophila melanogaster (Fruit fly).